A 204-amino-acid polypeptide reads, in one-letter code: Probable molybdenum cofactor guanylyltransferase (204 aa).

GTP-binding positions include 10-12 (LSG), lysine 22, aspartate 75, and aspartate 104. Position 104 (aspartate 104) interacts with Mg(2+).

It belongs to the MobA family. It depends on Mg(2+) as a cofactor.

It localises to the cytoplasm. The catalysed reaction is Mo-molybdopterin + GTP + H(+) = Mo-molybdopterin guanine dinucleotide + diphosphate. Its function is as follows. Transfers a GMP moiety from GTP to Mo-molybdopterin (Mo-MPT) cofactor (Moco or molybdenum cofactor) to form Mo-molybdopterin guanine dinucleotide (Mo-MGD) cofactor. In Methanocaldococcus jannaschii (strain ATCC 43067 / DSM 2661 / JAL-1 / JCM 10045 / NBRC 100440) (Methanococcus jannaschii), this protein is Probable molybdenum cofactor guanylyltransferase.